The sequence spans 443 residues: Glutamate--tRNA ligase 1 (443 aa).

The short motif at 8–18 (PSPTGRLHVGN) is the 'HIGH' region element. A 'KMSKS' region motif is present at residues 239-243 (KLSKR). Position 242 (Lys242) interacts with ATP.

Belongs to the class-I aminoacyl-tRNA synthetase family. Glutamate--tRNA ligase type 1 subfamily. In terms of assembly, monomer.

It localises to the cytoplasm. It carries out the reaction tRNA(Glu) + L-glutamate + ATP = L-glutamyl-tRNA(Glu) + AMP + diphosphate. Its function is as follows. Catalyzes the attachment of glutamate to tRNA(Glu) in a two-step reaction: glutamate is first activated by ATP to form Glu-AMP and then transferred to the acceptor end of tRNA(Glu). The chain is Glutamate--tRNA ligase 1 from Rhizorhabdus wittichii (strain DSM 6014 / CCUG 31198 / JCM 15750 / NBRC 105917 / EY 4224 / RW1) (Sphingomonas wittichii).